Here is a 550-residue protein sequence, read N- to C-terminus: Arginine--tRNA ligase (550 aa).

The 'HIGH' region motif lies at 130-140 (ANPTGPIHIGG).

Belongs to the class-I aminoacyl-tRNA synthetase family. In terms of assembly, monomer.

The protein localises to the cytoplasm. The enzyme catalyses tRNA(Arg) + L-arginine + ATP = L-arginyl-tRNA(Arg) + AMP + diphosphate. In Mycobacterium ulcerans (strain Agy99), this protein is Arginine--tRNA ligase.